We begin with the raw amino-acid sequence, 739 residues long: UPF0313 protein YgiQ (739 aa).

Residues 372–650 (AYEMIRFSVN…KALLRYHDPA (279 aa)) form the Radical SAM core domain. [4Fe-4S] cluster contacts are provided by C386, C390, and C393. The tract at residues 686–739 (EARRQNRNTRPALTKHTPMATQCQTPATAKKASSTQSRPVNAGAKKRPKAAVGR) is disordered. Residues 704 to 724 (MATQCQTPATAKKASSTQSRP) are compositionally biased toward polar residues. Residues 729–739 (AKKRPKAAVGR) show a composition bias toward basic residues.

This sequence belongs to the UPF0313 family. The cofactor is [4Fe-4S] cluster.

The polypeptide is UPF0313 protein YgiQ (Escherichia coli O157:H7).